The sequence spans 460 residues: UDP-N-acetylmuramoylalanine--D-glutamate ligase (460 aa).

123–129 (GTNGKTT) contributes to the ATP binding site.

This sequence belongs to the MurCDEF family.

It localises to the cytoplasm. It catalyses the reaction UDP-N-acetyl-alpha-D-muramoyl-L-alanine + D-glutamate + ATP = UDP-N-acetyl-alpha-D-muramoyl-L-alanyl-D-glutamate + ADP + phosphate + H(+). Its pathway is cell wall biogenesis; peptidoglycan biosynthesis. Functionally, cell wall formation. Catalyzes the addition of glutamate to the nucleotide precursor UDP-N-acetylmuramoyl-L-alanine (UMA). The polypeptide is UDP-N-acetylmuramoylalanine--D-glutamate ligase (murD) (Enterococcus hirae).